Reading from the N-terminus, the 271-residue chain is Putative pyruvate, phosphate dikinase regulatory protein (271 aa).

151 to 158 (GISRTSKT) serves as a coordination point for ADP.

This sequence belongs to the pyruvate, phosphate/water dikinase regulatory protein family. PDRP subfamily.

It carries out the reaction N(tele)-phospho-L-histidyl/L-threonyl-[pyruvate, phosphate dikinase] + ADP = N(tele)-phospho-L-histidyl/O-phospho-L-threonyl-[pyruvate, phosphate dikinase] + AMP + H(+). The catalysed reaction is N(tele)-phospho-L-histidyl/O-phospho-L-threonyl-[pyruvate, phosphate dikinase] + phosphate + H(+) = N(tele)-phospho-L-histidyl/L-threonyl-[pyruvate, phosphate dikinase] + diphosphate. Its function is as follows. Bifunctional serine/threonine kinase and phosphorylase involved in the regulation of the pyruvate, phosphate dikinase (PPDK) by catalyzing its phosphorylation/dephosphorylation. This is Putative pyruvate, phosphate dikinase regulatory protein from Streptococcus uberis (strain ATCC BAA-854 / 0140J).